The chain runs to 742 residues: Transcription factor FFUJ_09177 (742 aa).

Positions Cys15–Cys41 form a DNA-binding region, zn(2)-C6 fungal-type. 2 disordered regions span residues Gly50–Gln80 and His218–Asp244. Positions His218–Ser240 are enriched in polar residues.

It is found in the nucleus. Transcription factor; part of the DMATS1 gene cluster that mediates the biosynthesis of a reversely N-prenylated monomeric L-tryptophan (r-N-DMAT). Seems not to regulate the expression of the DMATS1 cluster. This Gibberella fujikuroi (strain CBS 195.34 / IMI 58289 / NRRL A-6831) (Bakanae and foot rot disease fungus) protein is Transcription factor FFUJ_09177.